Here is a 441-residue protein sequence, read N- to C-terminus: UPF0761 membrane protein Clim_1521 (441 aa).

A run of 6 helical transmembrane segments spans residues 54–74, 122–142, 161–181, 203–223, 233–253, and 266–286; these read IFLS…PFLA, TVPL…ISTI, AFTL…SSLG, LISF…YMLV, AFSG…WFVF, and GAIS…LVVL.

It belongs to the UPF0761 family.

The protein localises to the cell inner membrane. This chain is UPF0761 membrane protein Clim_1521, found in Chlorobium limicola (strain DSM 245 / NBRC 103803 / 6330).